We begin with the raw amino-acid sequence, 674 residues long: tRNA 5-methylaminomethyl-2-thiouridine biosynthesis bifunctional protein MnmC (674 aa).

The interval 1 to 237 (MLTSYQLESP…KREMTVGELN (237 aa)) is tRNA (mnm(5)s(2)U34)-methyltransferase. The interval 270 to 674 (VGAGLAGANT…IRDLKRSQIL (405 aa)) is FAD-dependent cmnm(5)s(2)U34 oxidoreductase.

This sequence in the N-terminal section; belongs to the methyltransferase superfamily. tRNA (mnm(5)s(2)U34)-methyltransferase family. It in the C-terminal section; belongs to the DAO family. FAD serves as cofactor.

The protein localises to the cytoplasm. The enzyme catalyses 5-aminomethyl-2-thiouridine(34) in tRNA + S-adenosyl-L-methionine = 5-methylaminomethyl-2-thiouridine(34) in tRNA + S-adenosyl-L-homocysteine + H(+). In terms of biological role, catalyzes the last two steps in the biosynthesis of 5-methylaminomethyl-2-thiouridine (mnm(5)s(2)U) at the wobble position (U34) in tRNA. Catalyzes the FAD-dependent demodification of cmnm(5)s(2)U34 to nm(5)s(2)U34, followed by the transfer of a methyl group from S-adenosyl-L-methionine to nm(5)s(2)U34, to form mnm(5)s(2)U34. This Marinomonas sp. (strain MWYL1) protein is tRNA 5-methylaminomethyl-2-thiouridine biosynthesis bifunctional protein MnmC.